Reading from the N-terminus, the 155-residue chain is Putative pre-16S rRNA nuclease (155 aa).

This sequence belongs to the YqgF nuclease family.

It localises to the cytoplasm. Functionally, could be a nuclease involved in processing of the 5'-end of pre-16S rRNA. The polypeptide is Putative pre-16S rRNA nuclease (Wolbachia sp. subsp. Drosophila simulans (strain wRi)).